The following is a 633-amino-acid chain: Opioid growth factor receptor (633 aa).

Met-1 carries the N-acetylmethionine modification. Residues 1 to 38 (MDDPECDSTWEDESEEDGEDGQADDTTDEDTGDDDGDA) show a composition bias toward acidic residues. A disordered region spans residues 1 to 44 (MDDPECDSTWEDESEEDGEDGQADDTTDEDTGDDDGDAEEARPS). Residues 257–286 (RRELVHFAWEHFKPRREFVWGPRDKLRRFR) carry the Bipartite nuclear localization signal motif. Residues 287–390 (PQTISRPLMG…EPDPQGVSEV (104 aa)) form a disordered region. Residues Ser-327, Ser-340, Ser-361, Ser-365, Ser-403, and Ser-452 each carry the phosphoserine modification. A compositionally biased stretch (basic and acidic residues) spans 351–374 (GDQRHEAKSPSPKESKKRKLEGNR). Positions 404–633 (PTSQEPREAE…IEASVEPPKP (230 aa)) are disordered. The span at 441-455 (ASNTQVQASALSPTP) shows a compositional bias: polar residues. 14 consecutive repeat copies span residues 467–475 (GPEDPKSQV), 476–484 (GPEDPKSQV), 485–493 (GPEDPKSQV), 494–502 (GPEDPKSQV), 503–511 (GPEDPKGQV), 512–520 (EPEDPKGQV), 521–529 (GPEDPKGQV), 530–538 (GPEDPKGQV), 539–547 (GPEDPKSQV), 548–556 (GPEDPKSQV), 557–565 (EPEDPKSQV), 566–574 (EPEDPKSQV), 575–583 (EPEDPKSQV), and 584–592 (GPEDPQSQV). Residues 467-592 (GPEDPKSQVG…VGPEDPQSQV (126 aa)) form a 14 X approximate tandem repeats region. The segment covering 505–517 (EDPKGQVEPEDPK) has biased composition (basic and acidic residues). Positions 550-580 (EDPKSQVEPEDPKSQVEPEDPKSQVEPEDPK) are enriched in basic and acidic residues. Phosphoserine is present on residues Ser-601 and Ser-608.

This sequence belongs to the opioid growth factor receptor family. In terms of tissue distribution, expressed in all tissues examined, including brain, heart, lung, liver, kidney and skeletal muscle.

The protein localises to the cytoplasm. Its subcellular location is the nucleus. Receptor for opioid growth factor (OGF), also known as Met-enkephalin. Seems to be involved in growth regulation. The chain is Opioid growth factor receptor (Ogfr) from Mus musculus (Mouse).